A 289-amino-acid chain; its full sequence is Diaminopimelate epimerase (289 aa).

2 residues coordinate substrate: N11 and N78. The active-site Proton donor is the C87. Substrate-binding positions include 88 to 89 (GN), N163, N199, and 217 to 218 (ER). The active-site Proton acceptor is C226. Substrate is bound at residue 227-228 (GT).

This sequence belongs to the diaminopimelate epimerase family. As to quaternary structure, homodimer.

Its subcellular location is the cytoplasm. It carries out the reaction (2S,6S)-2,6-diaminopimelate = meso-2,6-diaminopimelate. It functions in the pathway amino-acid biosynthesis; L-lysine biosynthesis via DAP pathway; DL-2,6-diaminopimelate from LL-2,6-diaminopimelate: step 1/1. In terms of biological role, catalyzes the stereoinversion of LL-2,6-diaminopimelate (L,L-DAP) to meso-diaminopimelate (meso-DAP), a precursor of L-lysine and an essential component of the bacterial peptidoglycan. This Mycobacterium bovis (strain ATCC BAA-935 / AF2122/97) protein is Diaminopimelate epimerase.